A 185-amino-acid chain; its full sequence is Ribosome-recycling factor (185 aa).

The protein belongs to the RRF family.

The protein localises to the cytoplasm. In terms of biological role, responsible for the release of ribosomes from messenger RNA at the termination of protein biosynthesis. May increase the efficiency of translation by recycling ribosomes from one round of translation to another. The chain is Ribosome-recycling factor from Campylobacter jejuni (strain RM1221).